The primary structure comprises 617 residues: Elongation factor 4 (617 aa).

Positions 17–198 constitute a tr-type G domain; it reads AIIRNFCIIA…KIVRDLPAPV (182 aa). Residues 29–34 and 145–148 contribute to the GTP site; these read DHGKST and NKID.

Belongs to the TRAFAC class translation factor GTPase superfamily. Classic translation factor GTPase family. LepA subfamily.

It is found in the cell membrane. The catalysed reaction is GTP + H2O = GDP + phosphate + H(+). Required for accurate and efficient protein synthesis under certain stress conditions. May act as a fidelity factor of the translation reaction, by catalyzing a one-codon backward translocation of tRNAs on improperly translocated ribosomes. Back-translocation proceeds from a post-translocation (POST) complex to a pre-translocation (PRE) complex, thus giving elongation factor G a second chance to translocate the tRNAs correctly. Binds to ribosomes in a GTP-dependent manner. The protein is Elongation factor 4 of Arthrobacter sp. (strain FB24).